We begin with the raw amino-acid sequence, 263 residues long: Small ribosomal subunit protein eS4 (263 aa).

The region spanning 42 to 104 is the S4 RNA-binding domain; the sequence is LPLIIFLRNK…TGENFRLIYD (63 aa). A Glycyl lysine isopeptide (Lys-Gly) (interchain with G-Cter in SUMO2) cross-link involves residue lysine 230. Lysine 233 is modified (N6-acetyllysine).

The protein belongs to the eukaryotic ribosomal protein eS4 family. In terms of assembly, component of the small ribosomal subunit. Part of the small subunit (SSU) processome, composed of more than 70 proteins and the RNA chaperone small nucleolar RNA (snoRNA) U3. Identified in a IGF2BP1-dependent mRNP granule complex containing untranslated mRNAs.

The protein resides in the cytoplasm. It is found in the nucleus. Its subcellular location is the nucleolus. Component of the small ribosomal subunit. The ribosome is a large ribonucleoprotein complex responsible for the synthesis of proteins in the cell. Part of the small subunit (SSU) processome, first precursor of the small eukaryotic ribosomal subunit. During the assembly of the SSU processome in the nucleolus, many ribosome biogenesis factors, an RNA chaperone and ribosomal proteins associate with the nascent pre-rRNA and work in concert to generate RNA folding, modifications, rearrangements and cleavage as well as targeted degradation of pre-ribosomal RNA by the RNA exosome. This Oryctolagus cuniculus (Rabbit) protein is Small ribosomal subunit protein eS4 (RPS4X).